Reading from the N-terminus, the 1174-residue chain is DNA-directed RNA polymerase subunit beta' (1174 aa).

Zn(2+) contacts are provided by cysteine 60, cysteine 62, cysteine 75, and cysteine 78. Mg(2+) contacts are provided by aspartate 450, aspartate 452, and aspartate 454. Residues cysteine 795, cysteine 869, cysteine 876, and cysteine 879 each contribute to the Zn(2+) site.

Belongs to the RNA polymerase beta' chain family. In terms of assembly, the RNAP catalytic core consists of 2 alpha, 1 beta, 1 beta' and 1 omega subunit. When a sigma factor is associated with the core the holoenzyme is formed, which can initiate transcription. Requires Mg(2+) as cofactor. The cofactor is Zn(2+).

It catalyses the reaction RNA(n) + a ribonucleoside 5'-triphosphate = RNA(n+1) + diphosphate. DNA-dependent RNA polymerase catalyzes the transcription of DNA into RNA using the four ribonucleoside triphosphates as substrates. The chain is DNA-directed RNA polymerase subunit beta' from Clostridium kluyveri (strain ATCC 8527 / DSM 555 / NBRC 12016 / NCIMB 10680 / K1).